The chain runs to 624 residues: uncharacterized protein (624 aa).

Residues 113-249 (SINVRTSATT…RFHPVTDINK (137 aa)) are disordered. A compositionally biased stretch (low complexity) spans 118 to 225 (TSATTTESTN…ATTTESTNAS (108 aa)). Residues 226-249 (AKEDANKDGNAEDNRFHPVTDINK) are compositionally biased toward basic and acidic residues.

This is an uncharacterized protein from Saccharomyces cerevisiae (strain ATCC 204508 / S288c) (Baker's yeast).